The sequence spans 1321 residues: Lysine-specific demethylase 3A (1321 aa).

Phosphoserine occurs at positions 264 and 325. Disordered stretches follow at residues 307–336 (ATPP…IPQG), 383–402 (LTEP…QENR), and 438–472 (KHLE…GKKV). Residues 316–327 (QQSTPQAANSPP) show a composition bias toward polar residues. Ser445 bears the Phosphoserine mark. The segment at 662–687 (CDVCDTTIFNLHWVCPRCGFGVCVDC) adopts a C6-type zinc-finger fold. Ser766 is subject to Phosphoserine. The LXXLL motif motif lies at 885-889 (LRNLL). Residue Lys895 is modified to N6-acetyllysine. A JmjC domain is found at 1058–1281 (MPSRFDDLMA…HCFWLTQEFR (224 aa)). Fe cation contacts are provided by His1120, Asp1122, and His1249.

This sequence belongs to the JHDM2 histone demethylase family. As to quaternary structure, interacts with VRK1. The cofactor is Fe(2+).

The protein resides in the cytoplasm. Its subcellular location is the nucleus. The enzyme catalyses N(6),N(6)-dimethyl-L-lysyl(9)-[histone H3] + 2 2-oxoglutarate + 2 O2 = L-lysyl(9)-[histone H3] + 2 formaldehyde + 2 succinate + 2 CO2. Its function is as follows. Histone demethylase that specifically demethylates 'Lys-9' of histone H3, thereby playing a central role in histone code. Preferentially demethylates mono- and dimethylated H3 'Lys-9' residue, with a preference for dimethylated residue, while it has weak or no activity on trimethylated H3 'Lys-9'. Demethylation of Lys residue generates formaldehyde and succinate. Involved in hormone-dependent transcriptional activation, by participating in recruitment to androgen-receptor target genes, resulting in H3 'Lys-9' demethylation and transcriptional activation. Involved in spermatogenesis by regulating expression of target genes such as PRM1 and TNP1 which are required for packaging and condensation of sperm chromatin. Involved in obesity resistance through regulation of metabolic genes such as PPARA and UCP1. In Homo sapiens (Human), this protein is Lysine-specific demethylase 3A (KDM3A).